A 396-amino-acid polypeptide reads, in one-letter code: Calcium-responsive transactivator (396 aa).

The segment at 1–148 (MSVAFASARP…TLPTTSMSIS (148 aa)) is N-terminal auto-inhibitory domain; necessary for interaction with SMARCA4/BRG1. Positions 50–53 (YQQI) match the SH2-binding motif. 3 disordered regions span residues 72–162 (QSLL…SQGV), 192–280 (QAAT…GDYA), and 311–396 (SQQQ…NYQQ). A compositionally biased stretch (low complexity) spans 90–106 (LTQSGSSQGLHSQGSLS). 2 stretches are compositionally biased toward polar residues: residues 107-122 (DAIS…LQGQ) and 128-147 (SHVS…SMSI). The segment at 149–232 (GPGYSHAGPA…GSSMMGQRPM (84 aa)) is methionine-rich intra-molecular domain. Composition is skewed to low complexity over residues 199–229 (SSAQ…MMGQ), 238–261 (SQQG…SHSQ), and 311–369 (SQQQ…YGSY). The MFD domain stretch occupies residues 246–317 (YLGQEEYYGE…SQYSQQQAGY (72 aa)). A necessary for nuclear localization region spans residues 334-396 (SQQSYPGQQQ…EQGQYGNYQQ (63 aa)). Residues 353–356 (SQYP) carry the SH2-binding motif. An SH3-binding motif is present at residues 371–379 (APQTAPSAQ). The span at 384–396 (YGYEQGQYGNYQQ) shows a compositional bias: low complexity. Residues 387 to 396 (EQGQYGNYQQ) form a necessary for interaction with CREBBP and for the recruitment of CREBBP to the nuclear bodies region. Positions 391–394 (YGNY) match the SH2-binding motif.

This sequence belongs to the SS18 family. Homodimer. Dimerization may be necessary for its function in neuronal dendritic development. Interacts (via C-terminus) with CREBBP (via N-terminus), EP300 and SMARCA4/BRG1. Interacts with the nBAF complex. Association with CREBBP facilitates transcription while the association with SMARCA4/BRG1 suppresses CREST-mediated transcription in resting neurons. Ubiquitous; with lowest levels in spleen.

Its subcellular location is the nucleus. It is found in the chromosome. The protein resides in the centromere. It localises to the kinetochore. Functionally, transcriptional activator which is required for calcium-dependent dendritic growth and branching in cortical neurons. Recruits CREB-binding protein (CREBBP) to nuclear bodies. Component of the CREST-BRG1 complex, a multiprotein complex that regulates promoter activation by orchestrating a calcium-dependent release of a repressor complex and a recruitment of an activator complex. In resting neurons, transcription of the c-FOS promoter is inhibited by BRG1-dependent recruitment of a phospho-RB1-HDAC1 repressor complex. Upon calcium influx, RB1 is dephosphorylated by calcineurin, which leads to release of the repressor complex. At the same time, there is increased recruitment of CREBBP to the promoter by a CREST-dependent mechanism, which leads to transcriptional activation. The CREST-BRG1 complex also binds to the NR2B promoter, and activity-dependent induction of NR2B expression involves a release of HDAC1 and recruitment of CREBBP. This is Calcium-responsive transactivator (SS18L1) from Homo sapiens (Human).